A 510-amino-acid polypeptide reads, in one-letter code: 2,3-bisphosphoglycerate-independent phosphoglycerate mutase (510 aa).

2 residues coordinate Mn(2+): D12 and S62. The active-site Phosphoserine intermediate is S62. Substrate is bound by residues H123, 153 to 154 (RD), R185, R191, 260 to 263 (RPDR), and K335. D402, H406, D443, H444, and H461 together coordinate Mn(2+).

The protein belongs to the BPG-independent phosphoglycerate mutase family. As to quaternary structure, monomer. Requires Mn(2+) as cofactor.

It carries out the reaction (2R)-2-phosphoglycerate = (2R)-3-phosphoglycerate. The protein operates within carbohydrate degradation; glycolysis; pyruvate from D-glyceraldehyde 3-phosphate: step 3/5. Functionally, catalyzes the interconversion of 2-phosphoglycerate and 3-phosphoglycerate. This is 2,3-bisphosphoglycerate-independent phosphoglycerate mutase from Listeria innocua serovar 6a (strain ATCC BAA-680 / CLIP 11262).